A 377-amino-acid polypeptide reads, in one-letter code: Homoserine O-succinyltransferase (377 aa).

An AB hydrolase-1 domain is found at 45 to 356 (NAVLVCHALN…PHGHDAFLLD (312 aa)). Ser151 serves as the catalytic Nucleophile. Arg221 provides a ligand contact to substrate. Residues Asp317 and His350 contribute to the active site. Substrate is bound at residue Asp351.

Belongs to the AB hydrolase superfamily. MetX family. As to quaternary structure, homodimer.

The protein localises to the cytoplasm. It catalyses the reaction L-homoserine + succinyl-CoA = O-succinyl-L-homoserine + CoA. The protein operates within amino-acid biosynthesis; L-methionine biosynthesis via de novo pathway; O-succinyl-L-homoserine from L-homoserine: step 1/1. Functionally, transfers a succinyl group from succinyl-CoA to L-homoserine, forming succinyl-L-homoserine. The polypeptide is Homoserine O-succinyltransferase (Leptothrix cholodnii (strain ATCC 51168 / LMG 8142 / SP-6) (Leptothrix discophora (strain SP-6))).